A 1139-amino-acid polypeptide reads, in one-letter code: Replication protein alpha-A (1139 aa).

Residues 60–438 are methyltransferase; that stretch reads RRNISSEELQ…DGVKIAPDLI (379 aa). The region spanning 81–305 is the Alphavirus-like MT domain; it reads SSSACESGTH…HDLKDYLKYV (225 aa). The interval 611–637 is disordered; it reads SPLDLKSIPGSTPSHSSSDSEHSMTEE. The segment covering 617–627 has biased composition (low complexity); the sequence is SIPGSTPSHSS. The region spanning 805-969 is the (+)RNA virus helicase ATP-binding domain; that stretch reads DNTKLCNNWL…DYTKTIINPK (165 aa). Positions 835–1109 are helicase; that stretch reads LIDGVPGCGK…SRHTKTFTYC (275 aa). 838-845 is an ATP binding site; sequence GVPGCGKS. Residues 970-1139 enclose the (+)RNA virus helicase C-terminal domain; that stretch reads LRSYRIPGDV…PIRTFESHIV (170 aa).

Interacts with the suppressor of RNA silencing Gamma-B (via C-terminus).

The protein resides in the host chloroplast envelope. The enzyme catalyses ATP + H2O = ADP + phosphate + H(+). In terms of biological role, probably contains methyltransferase and helicase activities. Methyltransferase displays a cytoplasmic capping enzyme activity. This function is necessary since all viral RNAs are synthesized in the cytoplasm, and host capping enzymes are restricted to the nucleus. Helicase region probably exhibits NTPase and RNA unwinding activities. The sequence is that of Replication protein alpha-A from Barley stripe mosaic virus (BSMV).